Here is a 146-residue protein sequence, read N- to C-terminus: Snaclec alboaggregin-B subunit beta (146 aa).

An N-terminal signal peptide occupies residues 1 to 23; the sequence is MGRFIFGSFGLLVLFLSLSGTGA. Residues 24 to 143 form the C-type lectin domain; that stretch reads DCPSDWSSYD…CSRTYPFVCK (120 aa). 3 cysteine pairs are disulfide-bonded: Cys-25–Cys-36, Cys-53–Cys-142, and Cys-119–Cys-134.

The protein belongs to the snaclec family. As to quaternary structure, heterodimer of subunits alpha and beta; disulfide-linked. Expressed by the venom gland.

Its subcellular location is the secreted. In terms of biological role, weakly agglutinates platelets at high doses by binding to GPIbalpha (GP1BA). In Trimeresurus albolabris (White-lipped pit viper), this protein is Snaclec alboaggregin-B subunit beta.